The sequence spans 155 residues: RING finger protein 122 (155 aa).

A helical transmembrane segment spans residues 40–60 (VIFGTGIFVFMLSLIFCCYFI). The RING-type; atypical zinc-finger motif lies at 93–134 (CAVCLEDFKGKDELGVLPCQHAFHRKCLVKWLEVRCVCPMCN).

The protein resides in the golgi apparatus. It is found in the endoplasmic reticulum. It localises to the membrane. Functionally, may induce necrosis and apoptosis. May play a role in cell viability. The protein is RING finger protein 122 (Rnf122) of Mus musculus (Mouse).